The sequence spans 212 residues: MPLNEIIGVIGNLISKGYIQKQSVIDALMSVPRHKFIPKAMEEYAYIDSPLGIGCGQTISAIHMVGIMCEELDLDVGQNVLEVGTGSGYHAAVVSEIVGESGKVTTIERIPELFEKSKQVLSELGYENVEVVLGDGTKGYLENAPYDRIYVTASGPNVPIALFEQLNDGGIILAPVGSHFQTLMRYKKINGKIFKEKLLEVAFVPLIGENGF.

Ser60 is a catalytic residue.

This sequence belongs to the methyltransferase superfamily. L-isoaspartyl/D-aspartyl protein methyltransferase family.

The protein resides in the cytoplasm. The catalysed reaction is [protein]-L-isoaspartate + S-adenosyl-L-methionine = [protein]-L-isoaspartate alpha-methyl ester + S-adenosyl-L-homocysteine. Functionally, catalyzes the methyl esterification of L-isoaspartyl residues in peptides and proteins that result from spontaneous decomposition of normal L-aspartyl and L-asparaginyl residues. It plays a role in the repair and/or degradation of damaged proteins. The polypeptide is Protein-L-isoaspartate O-methyltransferase (Methanococcus maripaludis (strain C5 / ATCC BAA-1333)).